The chain runs to 860 residues: DDB1- and CUL4-associated factor 6 (860 aa).

5 WD repeats span residues 49 to 88 (VHDGCVNTICWNDTGEYILSGSDDTKLVISNPYSRKVLTT), 92 to 133 (GHRA…ETNR), 139 to 179 (CHYG…SCTK), 189 to 229 (NCRR…TRAT), and 251 to 290 (NKSCRVTSLCYSEDGQEILVSYSSDYIYLFDPKDDTAREL). Composition is skewed to basic and acidic residues over residues 288 to 303 (RELKTPSAEERREELR) and 312 to 334 (LRGDWSDTGPRARPESERERDGE). Disordered stretches follow at residues 288 to 340 (RELK…PNVS), 355 to 392 (EASEVAQSNRGRGRSRPRGGTSQSDISTLPTVPSSPDL), 407 to 490 (QFLQ…TTST), and 502 to 675 (IASS…GPGD). At Ser-336 the chain carries Phosphoserine. Polar residues-rich tracts occupy residues 379-388 (DISTLPTVPS) and 409-421 (LQPSTSSTMSAQA). Residues 422-441 (HSTSSPTESPHSTPLLSSPD) show a composition bias toward low complexity. The span at 457–467 (HQSDNNNEKLS) shows a compositional bias: basic and acidic residues. Residues 480–490 (HYSTEGTTTST) show a composition bias toward polar residues. Residues 502 to 511 (IASSSRGIGS) are compositionally biased toward low complexity. Residues 535 to 549 (SETKAPEESSEDVTK) are compositionally biased toward basic and acidic residues. A compositionally biased stretch (low complexity) spans 614 to 626 (TSTESATNENNTN). The span at 627–636 (PEPQFQTEAT) shows a compositional bias: polar residues. Ser-649 carries the post-translational modification Phosphoserine. At Thr-654 the chain carries Phosphothreonine. Residue Ser-657 is modified to Phosphoserine. The 30-residue stretch at 676-705 (RRSAVARIQEFFRRRKERKEMEELDTLNIR) folds into the IQ domain. WD repeat units lie at residues 718-756 (NSRTMIKEANFWGANFVMSGSDCGHIFIWDRHTAEHLML) and 759-798 (ADNHVVNCLQPHPFDPILASSGIDYDIKIWSPLEESRIFN). Phosphoserine is present on residues Ser-847 and Ser-850.

As to quaternary structure, interacts with the nuclear receptors NR3C1 and AR in the presence of ligand. Interacts with DDB1, CUL4A and CUL4B. Highly expressed in skeletal muscle and testis. Expressed to a lesser degree in heart, prostate, and adrenal gland.

The protein resides in the nucleus. The protein operates within protein modification; protein ubiquitination. In terms of biological role, ligand-dependent coactivator of nuclear receptors. Enhance transcriptional activity of the nuclear receptors NR3C1 and AR. May function as a substrate receptor for CUL4-DDB1 E3 ubiquitin-protein ligase complex. The protein is DDB1- and CUL4-associated factor 6 (DCAF6) of Homo sapiens (Human).